Consider the following 351-residue polypeptide: MPTKIAVLGAGSWGTVLANLLTENGHEVDLWSHNPDQVALMKRTHQNEHYLGAEFTLQPALHVTADLGQALDQAAVILFVVPTNAIRSVAEQVKPILQAHKGRGEQPIIVHAAKGLERGSELRISQVLAEVLPKELIQGIVVISGPSHAEDVATHDITTLTAASDDLKLAEKVQKLFMNDYFRLYTNTDVIGVEIGAALKNVIAIGAGALHGLGYGDNTKAALMTRGLAEISRVGVKLGAEPLTFIGLSGVGDLIVTCTSVHSRNWRAGNALGKGEKLPDVLKNMGMVVEGVSTTKVAHQMARELDVDMPITDAIYQVLYENAPIRTVITDLMKRSGKPEFDFDNASLQKP.

4 residues coordinate NADPH: Ser12, Trp13, His33, and Lys114. Sn-glycerol 3-phosphate contacts are provided by Lys114, Gly145, and Ser147. Ala149 provides a ligand contact to NADPH. Lys200, Asp253, Ser263, Arg264, and Asn265 together coordinate sn-glycerol 3-phosphate. Lys200 acts as the Proton acceptor in catalysis. Position 264 (Arg264) interacts with NADPH. NADPH is bound by residues Val288 and Glu290.

It belongs to the NAD-dependent glycerol-3-phosphate dehydrogenase family.

Its subcellular location is the cytoplasm. The catalysed reaction is sn-glycerol 3-phosphate + NAD(+) = dihydroxyacetone phosphate + NADH + H(+). It catalyses the reaction sn-glycerol 3-phosphate + NADP(+) = dihydroxyacetone phosphate + NADPH + H(+). It functions in the pathway membrane lipid metabolism; glycerophospholipid metabolism. Catalyzes the reduction of the glycolytic intermediate dihydroxyacetone phosphate (DHAP) to sn-glycerol 3-phosphate (G3P), the key precursor for phospholipid synthesis. This is Glycerol-3-phosphate dehydrogenase [NAD(P)+] from Lacticaseibacillus paracasei (strain ATCC 334 / BCRC 17002 / CCUG 31169 / CIP 107868 / KCTC 3260 / NRRL B-441) (Lactobacillus paracasei).